The sequence spans 152 residues: Ribonuclease H (152 aa).

Positions 1–142 (MDSKVVIYTD…ADKLAVQGRE (142 aa)) constitute an RNase H type-1 domain. Mg(2+) contacts are provided by Asp-10, Glu-48, Asp-70, and Asp-134.

It belongs to the RNase H family. In terms of assembly, monomer. Mg(2+) serves as cofactor.

The protein resides in the cytoplasm. The catalysed reaction is Endonucleolytic cleavage to 5'-phosphomonoester.. In terms of biological role, endonuclease that specifically degrades the RNA of RNA-DNA hybrids. The protein is Ribonuclease H of Rickettsia typhi (strain ATCC VR-144 / Wilmington).